Consider the following 461-residue polypeptide: GTPase Der (461 aa).

2 EngA-type G domains span residues 2-166 (IKVA…PKKP) and 199-370 (IKVA…KNYS). GTP is bound by residues 8–15 (GKPNVGKS), 57–61 (DTGGL), 118–121 (NKID), 205–212 (GRVNVGKS), 252–256 (DTAGI), and 316–319 (NKWD). The region spanning 371-455 (KRIPTATLNK…PIIFVARKKG (85 aa)) is the KH-like domain.

Belongs to the TRAFAC class TrmE-Era-EngA-EngB-Septin-like GTPase superfamily. EngA (Der) GTPase family. Associates with the 50S ribosomal subunit.

Functionally, GTPase that plays an essential role in the late steps of ribosome biogenesis. This Nautilia profundicola (strain ATCC BAA-1463 / DSM 18972 / AmH) protein is GTPase Der.